The chain runs to 719 residues: Endonuclease MutS2 (719 aa).

273 to 280 (GPNTGGKT) is an ATP binding site. In terms of domain architecture, Smr spans 644–719 (LDLRGYRYED…GFGVTVATLK (76 aa)).

It belongs to the DNA mismatch repair MutS family. MutS2 subfamily. As to quaternary structure, homodimer. Binds to stalled ribosomes, contacting rRNA.

Functionally, endonuclease that is involved in the suppression of homologous recombination and thus may have a key role in the control of bacterial genetic diversity. Acts as a ribosome collision sensor, splitting the ribosome into its 2 subunits. Detects stalled/collided 70S ribosomes which it binds and splits by an ATP-hydrolysis driven conformational change. Acts upstream of the ribosome quality control system (RQC), a ribosome-associated complex that mediates the extraction of incompletely synthesized nascent chains from stalled ribosomes and their subsequent degradation. Probably generates substrates for RQC. The polypeptide is Endonuclease MutS2 (Staphylococcus aureus).